The primary structure comprises 287 residues: Pyridoxal 5'-phosphate synthase subunit PdxS (287 aa).

Asp-21 lines the D-ribose 5-phosphate pocket. Lys-78 serves as the catalytic Schiff-base intermediate with D-ribose 5-phosphate. Gly-150 contributes to the D-ribose 5-phosphate binding site. Arg-162 is a D-glyceraldehyde 3-phosphate binding site. Residues Gly-211 and 232-233 contribute to the D-ribose 5-phosphate site; that span reads GS.

Belongs to the PdxS/SNZ family. In the presence of PdxT, forms a dodecamer of heterodimers.

It catalyses the reaction aldehydo-D-ribose 5-phosphate + D-glyceraldehyde 3-phosphate + L-glutamine = pyridoxal 5'-phosphate + L-glutamate + phosphate + 3 H2O + H(+). It participates in cofactor biosynthesis; pyridoxal 5'-phosphate biosynthesis. Its function is as follows. Catalyzes the formation of pyridoxal 5'-phosphate from ribose 5-phosphate (RBP), glyceraldehyde 3-phosphate (G3P) and ammonia. The ammonia is provided by the PdxT subunit. Can also use ribulose 5-phosphate and dihydroxyacetone phosphate as substrates, resulting from enzyme-catalyzed isomerization of RBP and G3P, respectively. The chain is Pyridoxal 5'-phosphate synthase subunit PdxS from Francisella tularensis subsp. tularensis (strain FSC 198).